A 110-amino-acid chain; its full sequence is Iron-sulfur cluster assembly protein CyaY (110 aa).

This sequence belongs to the frataxin family.

Its function is as follows. Involved in iron-sulfur (Fe-S) cluster assembly. May act as a regulator of Fe-S biogenesis. The protein is Iron-sulfur cluster assembly protein CyaY of Pseudomonas entomophila (strain L48).